We begin with the raw amino-acid sequence, 290 residues long: 4-hydroxy-tetrahydrodipicolinate synthase (290 aa).

Thr44 contributes to the pyruvate binding site. The Proton donor/acceptor role is filled by Tyr132. The active-site Schiff-base intermediate with substrate is the Lys160. Position 202 (Ile202) interacts with pyruvate.

Belongs to the DapA family. As to quaternary structure, homotetramer; dimer of dimers.

Its subcellular location is the cytoplasm. The catalysed reaction is L-aspartate 4-semialdehyde + pyruvate = (2S,4S)-4-hydroxy-2,3,4,5-tetrahydrodipicolinate + H2O + H(+). The protein operates within amino-acid biosynthesis; L-lysine biosynthesis via DAP pathway; (S)-tetrahydrodipicolinate from L-aspartate: step 3/4. In terms of biological role, catalyzes the condensation of (S)-aspartate-beta-semialdehyde [(S)-ASA] and pyruvate to 4-hydroxy-tetrahydrodipicolinate (HTPA). In Trichlorobacter lovleyi (strain ATCC BAA-1151 / DSM 17278 / SZ) (Geobacter lovleyi), this protein is 4-hydroxy-tetrahydrodipicolinate synthase.